The sequence spans 297 residues: Beta-glucoside kinase (297 aa).

5–11 (AFDIGGT) contacts ATP.

The protein belongs to the ROK (NagC/XylR) family. In terms of assembly, homotetramer.

The enzyme catalyses D-cellobiose + ATP = 6-phospho-beta-D-glucosyl-(1-&gt;4)-D-glucose + ADP + H(+). Its activity is regulated as follows. Is inhibited by N-ethylmaleimide in vitro, but ATP affords considerable protection against the inhibitor. Functionally, catalyzes the ATP-dependent phosphorylation of a wide variety of beta-D-glucosides, to produce 6-phospho-beta-D-glucosides including cellobiose-6'-P, gentiobiose-6'-P, cellobiitol-6-P, salicin-6-P, and arbutin-6-P. Is not able to phosphorylate alpha-D-glucosides. May have a dual role of kinase and transcriptional regulator of the cellobiose-PTS operon. The protein is Beta-glucoside kinase (bglK) of Klebsiella pneumoniae.